Consider the following 2812-residue polypeptide: Zonadhesin (2812 aa).

The N-terminal stretch at 1–17 (MVPPVWTLLLLVGAALF) is a signal peptide. Over 18-2757 (RKEKPPDQKL…DAPPPRKPAS (2740 aa)) the chain is Extracellular. MAM domains are found at residues 39 to 204 (TQCD…SCNR), 209 to 368 (QTCS…PCGE), and 371 to 536 (PQCD…TCPV). A disordered region spans residues 61-84 (EDWVRASGPSPTGSTGAPGGYPNG). The span at 66–75 (ASGPSPTGST) shows a compositional bias: low complexity. 2 N-linked (GlcNAc...) asparagine glycosylation sites follow: asparagine 333 and asparagine 493. 2 disordered regions span residues 545–884 (VSPV…PTEK) and 904–929 (EKPTISPEKPTISTEKPTIPTEKPTI). Residues 547–558 (PVSSTGPSETTG) are compositionally biased toward low complexity. Residues 559 to 570 (LTENPTISTKKP) are compositionally biased toward polar residues. Residues 573–1041 (SIEKPSVTTE…GTTTTSRSST (469 aa)) form a 66 X heptapeptide repeats (approximate) (mucin-like domain) region. Composition is skewed to low complexity over residues 592 to 603 (TIPTEKPTISTE), 651 to 675 (TEKPTVPTEEPTTPTEETTTSMEEP), 713 to 842 (SPEK…STEK), 853 to 868 (STEKPTIPTEKPTISP), and 916 to 929 (STEKPTIPTEKPTI). The region spanning 1044 to 1093 (CPPNARYESCACPASCKSPRPSCGPLCREGCVCNPGFLFSDNHCIQASSC) is the TIL 1 domain. Residues 1103-1148 (EPGAEWFSPNCTEHCRCWPGSRVECQISQCGTHTVCQLKNGQYGCH) form the VWFC 1 domain. 2 N-linked (GlcNAc...) asparagine glycosylation sites follow: asparagine 1112 and asparagine 1188. In terms of domain architecture, VWFD 1 spans 1154 to 1331 (ATCLVYGDPH…TDQDEDQECQ (178 aa)). 2 cysteine pairs are disulfide-bonded: cysteine 1156–cysteine 1291 and cysteine 1178–cysteine 1330. Positions 1302-1316 (HLKLDGSPAGDKEEL) are enriched in basic and acidic residues. Positions 1302 to 1323 (HLKLDGSPAGDKEELGNSWQTD) are disordered. Residues 1426-1479 (CPPNSKYSLCAKPCPDTCHSGFSGMFCSDRCVEACECNPGFVLSGLECIPRSQC) enclose the TIL 2 domain. Positions 1480–1535 (GCLHPAGSYFKVGERWYKPGCKELCVCESNNRIRCQPWRCRAQEFCGQQDGIYGCH) constitute a VWFC 2 domain. Residues 1540–1720 (ATCTASGDPH…LPESSEPGCF (181 aa)) form the VWFD 2 domain. 2 disulfide bridges follow: cysteine 1542–cysteine 1680 and cysteine 1564–cysteine 1719. N-linked (GlcNAc...) asparagine glycans are attached at residues asparagine 1685 and asparagine 1804. The 56-residue stretch at 1812-1867 (CPPGSSYSPCSSPCPDTCSSINNPRDCPKALPCAESCECQKGHILSGTSCVPLGQC) folds into the TIL 3 domain. The VWFC 3 domain maps to 1868-1924 (GCTDPAGSYHPVGERWYTENTCTRLCTCSVHNNITCFQSTCKPNQICWALDGLLHCR). N-linked (GlcNAc...) asparagine glycans are attached at residues asparagine 1900 and asparagine 1946. The 180-residue stretch at 1929–2108 (GVCQLPGESH…KDKDIDPSCQ (180 aa)) folds into the VWFD 3 domain. 2 cysteine pairs are disulfide-bonded: cysteine 1931/cysteine 2069 and cysteine 1953/cysteine 2107. Residue asparagine 2203 is glycosylated (N-linked (GlcNAc...) asparagine). The TIL 4 domain maps to 2211-2267 (CPAYSSYTNCLPSCSPSCWDLDGRCEGAKVPSACAEGCICQPGYVLSEDKCVPRSQC). The VWFC 4 domain occupies 2268–2329 (GCKDAHGGSI…NSNCVSDKSE (62 aa)). Residues 2329 to 2505 (EQCSVYGDPR…SWEVKTEDAL (177 aa)) form the VWFD 4 domain. Residues cysteine 2331 and cysteine 2468 are joined by a disulfide bond. N-linked (GlcNAc...) asparagine glycosylation is found at asparagine 2542 and asparagine 2701. The region spanning 2652–2797 (CGCTSNGIYY…KREKTQEGDR (146 aa)) is the VWFC 5 domain. The region spanning 2708–2744 (PESPCLQNPCQNDGQCREQGATFTCECEVGYGGGLCM) is the EGF-like domain. 3 cysteine pairs are disulfide-bonded: cysteine 2712/cysteine 2723, cysteine 2717/cysteine 2732, and cysteine 2734/cysteine 2743. Residues 2758–2778 (NLVGVLLGLLVPVVVVLLAVT) traverse the membrane as a helical segment. The Cytoplasmic portion of the chain corresponds to 2779-2812 (RECIYRTRRKREKTQEGDRLARLVDTDTVLDCAC).

Probably forms covalent oligomers. In testis, primarily in haploid spermatids.

Its subcellular location is the cell membrane. Binds in a species-specific manner to the zona pellucida of the egg. May be involved in gamete recognition and/or signaling. This Homo sapiens (Human) protein is Zonadhesin (ZAN).